The following is a 350-amino-acid chain: UDP-N-acetylenolpyruvoylglucosamine reductase (350 aa).

The FAD-binding PCMH-type domain maps to 24–195 (HVEATARWLL…VAVEFNLPLL (172 aa)). Residue R172 is part of the active site. The Proton donor role is filled by S245. E342 is an active-site residue.

This sequence belongs to the MurB family. The cofactor is FAD.

The protein localises to the cytoplasm. It catalyses the reaction UDP-N-acetyl-alpha-D-muramate + NADP(+) = UDP-N-acetyl-3-O-(1-carboxyvinyl)-alpha-D-glucosamine + NADPH + H(+). The protein operates within cell wall biogenesis; peptidoglycan biosynthesis. Its function is as follows. Cell wall formation. This Xanthomonas axonopodis pv. citri (strain 306) protein is UDP-N-acetylenolpyruvoylglucosamine reductase.